A 437-amino-acid chain; its full sequence is tRNA-2-methylthio-N(6)-dimethylallyladenosine synthase (437 aa).

Residues 3-120 enclose the MTTase N-terminal domain; the sequence is RKLFIETHGC…LPEMIDAART (118 aa). Residues Cys12, Cys49, Cys83, Cys157, Cys161, and Cys164 each contribute to the [4Fe-4S] cluster site. The Radical SAM core domain maps to 143–370; sequence RVDGPSAYVS…QQRINQQGFE (228 aa). The TRAM domain occupies 373 to 437; sequence RRMVGTTQRI…PHSLRGSLLS (65 aa).

Belongs to the methylthiotransferase family. MiaB subfamily. As to quaternary structure, monomer. Requires [4Fe-4S] cluster as cofactor.

Its subcellular location is the cytoplasm. The catalysed reaction is N(6)-dimethylallyladenosine(37) in tRNA + (sulfur carrier)-SH + AH2 + 2 S-adenosyl-L-methionine = 2-methylsulfanyl-N(6)-dimethylallyladenosine(37) in tRNA + (sulfur carrier)-H + 5'-deoxyadenosine + L-methionine + A + S-adenosyl-L-homocysteine + 2 H(+). In terms of biological role, catalyzes the methylthiolation of N6-(dimethylallyl)adenosine (i(6)A), leading to the formation of 2-methylthio-N6-(dimethylallyl)adenosine (ms(2)i(6)A) at position 37 in tRNAs that read codons beginning with uridine. This chain is tRNA-2-methylthio-N(6)-dimethylallyladenosine synthase, found in Stutzerimonas stutzeri (strain A1501) (Pseudomonas stutzeri).